A 346-amino-acid polypeptide reads, in one-letter code: GTP 3',8-cyclase (346 aa).

Residues 10–240 form the Radical SAM core domain; it reads QRSRPLRVLR…VTRIRARWPL (231 aa). Position 19 (R19) interacts with GTP. [4Fe-4S] cluster-binding residues include C26 and C30. Y32 contributes to the S-adenosyl-L-methionine binding site. C33 lines the [4Fe-4S] cluster pocket. R65 contributes to the GTP binding site. G69 is an S-adenosyl-L-methionine binding site. T104 is a binding site for GTP. S129 is a binding site for S-adenosyl-L-methionine. Position 177 (K177) interacts with GTP. M211 lines the S-adenosyl-L-methionine pocket. Positions 274 and 277 each coordinate [4Fe-4S] cluster. GTP is bound at residue 279–281; that stretch reads RLR. [4Fe-4S] cluster is bound at residue C291. The interval 326 to 346 is disordered; the sequence is SDERQQTTGSMPHAEMAYLGG.

It belongs to the radical SAM superfamily. MoaA family. Monomer and homodimer. Requires [4Fe-4S] cluster as cofactor.

It carries out the reaction GTP + AH2 + S-adenosyl-L-methionine = (8S)-3',8-cyclo-7,8-dihydroguanosine 5'-triphosphate + 5'-deoxyadenosine + L-methionine + A + H(+). It participates in cofactor biosynthesis; molybdopterin biosynthesis. Functionally, catalyzes the cyclization of GTP to (8S)-3',8-cyclo-7,8-dihydroguanosine 5'-triphosphate. The chain is GTP 3',8-cyclase from Parasynechococcus marenigrum (strain WH8102).